Reading from the N-terminus, the 329-residue chain is UDP-glucose 4-epimerase (329 aa).

Residues 13–14, 33–38, 53–54, 76–80, Asn95, Thr120, Tyr144, Lys148, and Phe172 contribute to the NAD(+) site; these read YV, HNLSTG, DI, and FAAFS. Residues Thr120 and Tyr144 each coordinate substrate. Tyr144 (proton acceptor) is an active-site residue. Substrate is bound by residues Asn173, 190 to 191, 207 to 209, Arg221, and 281 to 284; these read HL, SVY, and RGRD.

It belongs to the NAD(P)-dependent epimerase/dehydratase family. As to quaternary structure, homodimer. NAD(+) is required as a cofactor.

It catalyses the reaction UDP-alpha-D-glucose = UDP-alpha-D-galactose. It participates in carbohydrate metabolism; galactose metabolism. Its function is as follows. Involved in the metabolism of galactose. Catalyzes the conversion of UDP-galactose (UDP-Gal) to UDP-glucose (UDP-Glc) through a mechanism involving the transient reduction of NAD. The polypeptide is UDP-glucose 4-epimerase (galE) (Streptomyces lividans).